The sequence spans 103 residues: Small ribosomal subunit protein uS10 (103 aa).

This sequence belongs to the universal ribosomal protein uS10 family. In terms of assembly, part of the 30S ribosomal subunit.

Involved in the binding of tRNA to the ribosomes. In Bordetella petrii (strain ATCC BAA-461 / DSM 12804 / CCUG 43448), this protein is Small ribosomal subunit protein uS10.